The primary structure comprises 494 residues: Amidophosphoribosyltransferase (494 aa).

The propeptide occupies 1-10 (MFNYSGLNEE). The active-site Nucleophile is Cys11. Positions 11–231 (CGVFGIWNHP…AGEYVVINDK (221 aa)) constitute a Glutamine amidotransferase type-2 domain. Ser294, Asp356, and Asp357 together coordinate Mg(2+).

In the C-terminal section; belongs to the purine/pyrimidine phosphoribosyltransferase family. The cofactor is Mg(2+).

The enzyme catalyses 5-phospho-beta-D-ribosylamine + L-glutamate + diphosphate = 5-phospho-alpha-D-ribose 1-diphosphate + L-glutamine + H2O. It functions in the pathway purine metabolism; IMP biosynthesis via de novo pathway; N(1)-(5-phospho-D-ribosyl)glycinamide from 5-phospho-alpha-D-ribose 1-diphosphate: step 1/2. Its function is as follows. Catalyzes the formation of phosphoribosylamine from phosphoribosylpyrophosphate (PRPP) and glutamine. This chain is Amidophosphoribosyltransferase, found in Staphylococcus aureus (strain Mu50 / ATCC 700699).